Consider the following 156-residue polypeptide: ATP synthase subunit b (156 aa).

The helical transmembrane segment at 3–23 (INFTLLAQALAFAGLIWIIAT) threads the bilayer.

It belongs to the ATPase B chain family. As to quaternary structure, F-type ATPases have 2 components, F(1) - the catalytic core - and F(0) - the membrane proton channel. F(1) has five subunits: alpha(3), beta(3), gamma(1), delta(1), epsilon(1). F(0) has three main subunits: a(1), b(2) and c(10-14). The alpha and beta chains form an alternating ring which encloses part of the gamma chain. F(1) is attached to F(0) by a central stalk formed by the gamma and epsilon chains, while a peripheral stalk is formed by the delta and b chains.

It localises to the cell membrane. Functionally, f(1)F(0) ATP synthase produces ATP from ADP in the presence of a proton or sodium gradient. F-type ATPases consist of two structural domains, F(1) containing the extramembraneous catalytic core and F(0) containing the membrane proton channel, linked together by a central stalk and a peripheral stalk. During catalysis, ATP synthesis in the catalytic domain of F(1) is coupled via a rotary mechanism of the central stalk subunits to proton translocation. Component of the F(0) channel, it forms part of the peripheral stalk, linking F(1) to F(0). The polypeptide is ATP synthase subunit b (Stenotrophomonas maltophilia (strain K279a)).